Reading from the N-terminus, the 132-residue chain is Small ribosomal subunit protein uS8 (132 aa).

Belongs to the universal ribosomal protein uS8 family. In terms of assembly, part of the 30S ribosomal subunit. Contacts proteins S5 and S12.

One of the primary rRNA binding proteins, it binds directly to 16S rRNA central domain where it helps coordinate assembly of the platform of the 30S subunit. The protein is Small ribosomal subunit protein uS8 of Ligilactobacillus salivarius (strain UCC118) (Lactobacillus salivarius).